The following is a 451-amino-acid chain: Midnolin-B (451 aa).

In terms of domain architecture, Ubiquitin-like spans 20–94 (MNLNIQSTTG…LTLLPSVEAG (75 aa)). Disordered regions lie at residues 187-254 (ASCT…RSRK), 331-372 (RNAK…QTEN), and 388-427 (QKRLRRKARRDSRAPYHWMPTRKSSRTSSNSSTSSGEGSL). Low complexity-rich tracts occupy residues 190–205 (TPGSTPPTTLSPTSST), 237–250 (STRGTEGTSSSPSS), and 336–347 (TSPQSTGPQQTT). Over residues 363 to 372 (SGDRLRQTEN) the composition is skewed to basic and acidic residues. Over residues 388–397 (QKRLRRKARR) the composition is skewed to basic residues. Residues 413-426 (RTSSNSSTSSGEGS) are compositionally biased toward low complexity.

It is found in the nucleus. The protein localises to the cytoplasm. It localises to the cytosol. Its subcellular location is the nucleolus. Facilitates ubiquitin-independent proteasomal degradation of polycomb protein CBX4. Plays a role in inhibiting the activity of glucokinase GCK and both glucose-induced and basal insulin secretion. This Xenopus laevis (African clawed frog) protein is Midnolin-B (midn-b).